The following is a 359-amino-acid chain: 3-dehydroquinate synthase (359 aa).

NAD(+) contacts are provided by residues 71-76 (DGEQYK), 105-109 (GVIGD), 129-130 (TT), Lys142, Lys151, and 169-172 (CLST). Residues Glu184, His247, and His264 each contribute to the Zn(2+) site.

This sequence belongs to the sugar phosphate cyclases superfamily. Dehydroquinate synthase family. It depends on Co(2+) as a cofactor. Zn(2+) is required as a cofactor. NAD(+) serves as cofactor.

Its subcellular location is the cytoplasm. The catalysed reaction is 7-phospho-2-dehydro-3-deoxy-D-arabino-heptonate = 3-dehydroquinate + phosphate. The protein operates within metabolic intermediate biosynthesis; chorismate biosynthesis; chorismate from D-erythrose 4-phosphate and phosphoenolpyruvate: step 2/7. Functionally, catalyzes the conversion of 3-deoxy-D-arabino-heptulosonate 7-phosphate (DAHP) to dehydroquinate (DHQ). The sequence is that of 3-dehydroquinate synthase from Shewanella piezotolerans (strain WP3 / JCM 13877).